The following is a 246-amino-acid chain: Probable transcriptional regulatory protein ESA_01378 (246 aa).

It belongs to the TACO1 family.

Its subcellular location is the cytoplasm. This chain is Probable transcriptional regulatory protein ESA_01378, found in Cronobacter sakazakii (strain ATCC BAA-894) (Enterobacter sakazakii).